We begin with the raw amino-acid sequence, 363 residues long: Phosphatidylinositol transfer protein sfh-5 (363 aa).

The interval 1–84 (MSTQPSDSAE…SPADIKDSVS (84 aa)) is disordered. Basic and acidic residues predominate over residues 36-46 (DAAKHAEEEPK). Positions 64-76 (KPAAAPAQEADSP) are enriched in low complexity. Positions 180-354 (AGDEPAVDEP…EYGGKGADLK (175 aa)) constitute a CRAL-TRIO domain. 5 residues coordinate heme: Y200, R220, H253, Y255, and K289.

Belongs to the SFH5 family. Heme b is required as a cofactor.

The protein localises to the cytoplasm. It localises to the endoplasmic reticulum membrane. It is found in the microsome membrane. The enzyme catalyses a 1,2-diacyl-sn-glycero-3-phospho-(1D-myo-inositol)(in) = a 1,2-diacyl-sn-glycero-3-phospho-(1D-myo-inositol)(out). Functionally, non-classical phosphatidylinositol (PtdIns) transfer protein (PITP), which exhibits PtdIns-binding/transfer activity in the absence of detectable PtdCho-binding/transfer activity. Regulates PtdIns(4,5)P2 homeostasis at the plasma membrane. Heme-binding protein that may play a role in organic oxidant-induced stress responses. The polypeptide is Phosphatidylinositol transfer protein sfh-5 (sfh-5) (Neurospora crassa (strain ATCC 24698 / 74-OR23-1A / CBS 708.71 / DSM 1257 / FGSC 987)).